A 354-amino-acid polypeptide reads, in one-letter code: uncharacterized protein (354 aa).

It belongs to the band 7/mec-2 family.

Its subcellular location is the mitochondrion. This is an uncharacterized protein from Schizosaccharomyces pombe (strain 972 / ATCC 24843) (Fission yeast).